The chain runs to 1073 residues: Carbamoyl phosphate synthase large chain (1073 aa).

A carboxyphosphate synthetic domain region spans residues 2 to 403; that stretch reads PKRTDIKSIL…SLQKALRGLE (402 aa). The ATP site is built by arginine 129, arginine 169, glycine 175, glycine 176, glutamate 208, leucine 210, glutamate 215, glycine 241, isoleucine 242, histidine 243, glutamine 285, and glutamate 299. Residues 133-328 enclose the ATP-grasp 1 domain; it reads DVAMKKIGLE…IAKVAAKLAV (196 aa). Glutamine 285, glutamate 299, and asparagine 301 together coordinate Mg(2+). Mn(2+) contacts are provided by glutamine 285, glutamate 299, and asparagine 301. Residues 404–553 form an oligomerization domain region; that stretch reads VGATGFDPKV…YSTYEEECEA (150 aa). The carbamoyl phosphate synthetic domain stretch occupies residues 554–936; sequence NPSTDREKIM…AFAKAQLGSN (383 aa). Residues 679–870 form the ATP-grasp 2 domain; sequence QHAVERLKLK…LAKVAARVMA (192 aa). Positions 715, 754, 756, 761, 786, 787, 788, 789, 829, and 841 each coordinate ATP. The Mg(2+) site is built by glutamine 829, glutamate 841, and asparagine 843. Mn(2+) contacts are provided by glutamine 829, glutamate 841, and asparagine 843. The 137-residue stretch at 937–1073 folds into the MGS-like domain; sequence STMKKHGRAL…SVQEMHAQIK (137 aa). Residues 937-1073 form an allosteric domain region; the sequence is STMKKHGRAL…SVQEMHAQIK (137 aa).

Belongs to the CarB family. In terms of assembly, composed of two chains; the small (or glutamine) chain promotes the hydrolysis of glutamine to ammonia, which is used by the large (or ammonia) chain to synthesize carbamoyl phosphate. Tetramer of heterodimers (alpha,beta)4. Mg(2+) is required as a cofactor. Requires Mn(2+) as cofactor.

It catalyses the reaction hydrogencarbonate + L-glutamine + 2 ATP + H2O = carbamoyl phosphate + L-glutamate + 2 ADP + phosphate + 2 H(+). It carries out the reaction hydrogencarbonate + NH4(+) + 2 ATP = carbamoyl phosphate + 2 ADP + phosphate + 2 H(+). The protein operates within amino-acid biosynthesis; L-arginine biosynthesis; carbamoyl phosphate from bicarbonate: step 1/1. Its pathway is pyrimidine metabolism; UMP biosynthesis via de novo pathway; (S)-dihydroorotate from bicarbonate: step 1/3. Its function is as follows. Large subunit of the glutamine-dependent carbamoyl phosphate synthetase (CPSase). CPSase catalyzes the formation of carbamoyl phosphate from the ammonia moiety of glutamine, carbonate, and phosphate donated by ATP, constituting the first step of 2 biosynthetic pathways, one leading to arginine and/or urea and the other to pyrimidine nucleotides. The large subunit (synthetase) binds the substrates ammonia (free or transferred from glutamine from the small subunit), hydrogencarbonate and ATP and carries out an ATP-coupled ligase reaction, activating hydrogencarbonate by forming carboxy phosphate which reacts with ammonia to form carbamoyl phosphate. The sequence is that of Carbamoyl phosphate synthase large chain from Escherichia coli (strain K12).